The chain runs to 461 residues: Cysteine--tRNA ligase (461 aa).

C28 contributes to the Zn(2+) binding site. A 'HIGH' region motif is present at residues 30–40 (ITVYDLCHIGH). The Zn(2+) site is built by C209, H234, and E238. The short motif at 266–270 (KMSKS) is the 'KMSKS' region element. K269 is an ATP binding site.

The protein belongs to the class-I aminoacyl-tRNA synthetase family. In terms of assembly, monomer. Zn(2+) serves as cofactor.

The protein resides in the cytoplasm. The enzyme catalyses tRNA(Cys) + L-cysteine + ATP = L-cysteinyl-tRNA(Cys) + AMP + diphosphate. This is Cysteine--tRNA ligase from Pectobacterium carotovorum subsp. carotovorum (strain PC1).